Here is a 684-residue protein sequence, read N- to C-terminus: Poly(A) RNA polymerase cid14 (684 aa).

Disordered stretches follow at residues 1–52, 64–127, and 161–219; these read MGKK…DAYD, DQEE…KRGE, and WNSD…QAYE. Composition is skewed to basic and acidic residues over residues 19-35, 73-91, 108-127, 171-186, and 199-210; these read ERTE…DKPS, GSKK…DKGG, DPLE…KRGE, SNDK…KSSK, and FFHEANEKSDSN. Positions 298 and 300 each coordinate Mg(2+). The ATP site is built by G364, K389, S407, Y408, N492, and K496. One can recognise a PAP-associated domain in the interval 434-492; sequence NFGVLLLEFLELYGKQFYYDAVGIAVHNGGFYFSKKKMGWLKPNQPYLLSIQDPVDFQN. The disordered stretch occupies residues 623–684; sequence GHENFQKQAL…SRAKKIRKRF (62 aa). Polar residues predominate over residues 628-655; that stretch reads QKQALTSTGEQSSSNSRANPSKLFNISS. A compositionally biased stretch (acidic residues) spans 656-672; the sequence is DDSEDEVPIIEDTTASD.

The protein belongs to the DNA polymerase type-B-like family. Heterooligomer. Component of the TRAMP complex composed of at least cid14, mtr4, and air1. Mg(2+) serves as cofactor. The cofactor is Mn(2+).

The protein localises to the nucleus. It localises to the nucleolus. The catalysed reaction is RNA(n) + ATP = RNA(n)-3'-adenine ribonucleotide + diphosphate. Its function is as follows. Required for 3' polyadenylation of the 5.8S and 25S rRNAs as a prelude to their degradation in the exosome. Involved in the nucleolar organization to ensure faithful chromosome segregation during mitosis. The protein is Poly(A) RNA polymerase cid14 (cid14) of Schizosaccharomyces pombe (strain 972 / ATCC 24843) (Fission yeast).